The chain runs to 462 residues: MKLFIQTLGCAMNERDSAHMIAELRDKKHYTLTNDIKQADLILINTCSVREKPEKKLFSEIGAFAKEKKAGAKIGVCGCTASHLGEEIIKKAPSVDFVLGARNVSKITQVLERPKAVEVDIDYDDSTYVFASSQGMGIKAHLNISIGCDKKCSYCIVPFTRGKEISVPKDLLISEAKKCVASGAKELLLLGQNVNNYGVRFSHSHPKTNFTQLLRALSEIDGLYRIRFTSPHPLHMDDEFLEEFASNPVIAKGIHIPLQSGSSQILKMMRRGYDKQWYLNRIAKLKSLVPNVGIGTDIIVGFPTESEQDFEDTMEVLSLVEFDTLYSFVYSPRPHTSAFEYDKSMLVSPEVAKERLARLQNLHKEILSKKAQLEIGRIHNVLIENHYNGEGQCWSEGRSSSNKLIKILDKKCEIGSIVKVEITHNEGGGLMGRFINELSLSEALASKEYFQNPIYIQEGALC.

The MTTase N-terminal domain maps to 1–116; that stretch reads MKLFIQTLGC…ITQVLERPKA (116 aa). [4Fe-4S] cluster is bound by residues C10, C47, C79, C148, C152, and C155. Residues 134-370 enclose the Radical SAM core domain; sequence QGMGIKAHLN…NLHKEILSKK (237 aa). The TRAM domain maps to 372–436; that stretch reads QLEIGRIHNV…GGGLMGRFIN (65 aa).

It belongs to the methylthiotransferase family. MiaB subfamily. As to quaternary structure, monomer. It depends on [4Fe-4S] cluster as a cofactor.

The protein localises to the cytoplasm. It catalyses the reaction N(6)-dimethylallyladenosine(37) in tRNA + (sulfur carrier)-SH + AH2 + 2 S-adenosyl-L-methionine = 2-methylsulfanyl-N(6)-dimethylallyladenosine(37) in tRNA + (sulfur carrier)-H + 5'-deoxyadenosine + L-methionine + A + S-adenosyl-L-homocysteine + 2 H(+). Functionally, catalyzes the methylthiolation of N6-(dimethylallyl)adenosine (i(6)A), leading to the formation of 2-methylthio-N6-(dimethylallyl)adenosine (ms(2)i(6)A) at position 37 in tRNAs that read codons beginning with uridine. In Helicobacter hepaticus (strain ATCC 51449 / 3B1), this protein is tRNA-2-methylthio-N(6)-dimethylallyladenosine synthase.